The chain runs to 335 residues: Zinc-type alcohol dehydrogenase-like protein SAV2186 (335 aa).

This sequence belongs to the zinc-containing alcohol dehydrogenase family. Quinone oxidoreductase subfamily.

This chain is Zinc-type alcohol dehydrogenase-like protein SAV2186, found in Staphylococcus aureus (strain Mu50 / ATCC 700699).